A 300-amino-acid polypeptide reads, in one-letter code: N-acetylmuramic acid 6-phosphate etherase (300 aa).

The region spanning 57 to 220 (IAVAFQSGGR…TTGAMIRTGK (164 aa)) is the SIS domain. The active-site Proton donor is the glutamate 85. The active site involves glutamate 116.

It belongs to the GCKR-like family. MurNAc-6-P etherase subfamily. As to quaternary structure, homodimer.

It catalyses the reaction N-acetyl-D-muramate 6-phosphate + H2O = N-acetyl-D-glucosamine 6-phosphate + (R)-lactate. The protein operates within amino-sugar metabolism; 1,6-anhydro-N-acetylmuramate degradation. Its pathway is amino-sugar metabolism; N-acetylmuramate degradation. It functions in the pathway cell wall biogenesis; peptidoglycan recycling. In terms of biological role, specifically catalyzes the cleavage of the D-lactyl ether substituent of MurNAc 6-phosphate, producing GlcNAc 6-phosphate and D-lactate. Together with AnmK, is also required for the utilization of anhydro-N-acetylmuramic acid (anhMurNAc) either imported from the medium or derived from its own cell wall murein, and thus plays a role in cell wall recycling. The chain is N-acetylmuramic acid 6-phosphate etherase from Aliivibrio fischeri (strain MJ11) (Vibrio fischeri).